The following is a 156-amino-acid chain: ATP synthase subunit b (156 aa).

A helical membrane pass occupies residues 11–31; sequence AIAFVLFVIFCMKYVWPPIMA.

It belongs to the ATPase B chain family. In terms of assembly, F-type ATPases have 2 components, F(1) - the catalytic core - and F(0) - the membrane proton channel. F(1) has five subunits: alpha(3), beta(3), gamma(1), delta(1), epsilon(1). F(0) has three main subunits: a(1), b(2) and c(10-14). The alpha and beta chains form an alternating ring which encloses part of the gamma chain. F(1) is attached to F(0) by a central stalk formed by the gamma and epsilon chains, while a peripheral stalk is formed by the delta and b chains.

The protein resides in the cell inner membrane. In terms of biological role, f(1)F(0) ATP synthase produces ATP from ADP in the presence of a proton or sodium gradient. F-type ATPases consist of two structural domains, F(1) containing the extramembraneous catalytic core and F(0) containing the membrane proton channel, linked together by a central stalk and a peripheral stalk. During catalysis, ATP synthesis in the catalytic domain of F(1) is coupled via a rotary mechanism of the central stalk subunits to proton translocation. Its function is as follows. Component of the F(0) channel, it forms part of the peripheral stalk, linking F(1) to F(0). The chain is ATP synthase subunit b from Yersinia pseudotuberculosis serotype O:1b (strain IP 31758).